Consider the following 428-residue polypeptide: Adenylosuccinate synthetase (428 aa).

Residues 12-18 (GDEGKGK) and 40-42 (GHT) contribute to the GTP site. D13 serves as the catalytic Proton acceptor. Mg(2+)-binding residues include D13 and G40. IMP-binding positions include 13–16 (DEGK), 38–41 (NAGH), T129, R143, Q224, T239, and R303. H41 functions as the Proton donor in the catalytic mechanism. Residue 299 to 305 (VTTGRIR) participates in substrate binding. GTP-binding positions include R305, 331–333 (KVD), and 410–412 (AYG).

Belongs to the adenylosuccinate synthetase family. In terms of assembly, homodimer. Requires Mg(2+) as cofactor.

The protein resides in the cytoplasm. It carries out the reaction IMP + L-aspartate + GTP = N(6)-(1,2-dicarboxyethyl)-AMP + GDP + phosphate + 2 H(+). Its pathway is purine metabolism; AMP biosynthesis via de novo pathway; AMP from IMP: step 1/2. Its function is as follows. Plays an important role in the de novo pathway of purine nucleotide biosynthesis. Catalyzes the first committed step in the biosynthesis of AMP from IMP. This chain is Adenylosuccinate synthetase, found in Francisella tularensis subsp. mediasiatica (strain FSC147).